The following is a 171-amino-acid chain: MALLSSNELRKLIKANPPLLENAVDTETQIQPNGLELTLKEIKTIEGAGAVDFDNSERKVPDAKPLEFGKDGWIHLPEGIYKVIFNEIVNIPMNLAAIAKPRSSLIRCGATLETAVWDAGYRGRSESMLVVYNPAGFKLKKNARIMQLLFYTLNTEVEEGYSGVYQNENTN.

It belongs to the dCTP deaminase family. Archaeal dUTPase subfamily.

The enzyme catalyses dUTP + H2O = dUMP + diphosphate + H(+). It participates in pyrimidine metabolism; dUMP biosynthesis; dUMP from dCTP (dUTP route): step 2/2. This enzyme is involved in nucleotide metabolism: it produces dUMP, the immediate precursor of thymidine nucleotides and it decreases the intracellular concentration of dUTP so that uracil cannot be incorporated into DNA. The protein is Probable deoxyuridine 5'-triphosphate nucleotidohydrolase of Methanosarcina mazei (strain ATCC BAA-159 / DSM 3647 / Goe1 / Go1 / JCM 11833 / OCM 88) (Methanosarcina frisia).